The primary structure comprises 366 residues: Ribosomal RNA large subunit methyltransferase M (366 aa).

S-adenosyl-L-methionine is bound by residues Ser188, 221–224 (CPGG), Asp240, Asp260, and Asp277. Lys306 serves as the catalytic Proton acceptor.

It belongs to the class I-like SAM-binding methyltransferase superfamily. RNA methyltransferase RlmE family. RlmM subfamily. In terms of assembly, monomer.

It localises to the cytoplasm. The catalysed reaction is cytidine(2498) in 23S rRNA + S-adenosyl-L-methionine = 2'-O-methylcytidine(2498) in 23S rRNA + S-adenosyl-L-homocysteine + H(+). Catalyzes the 2'-O-methylation at nucleotide C2498 in 23S rRNA. This chain is Ribosomal RNA large subunit methyltransferase M, found in Salmonella newport (strain SL254).